A 124-amino-acid polypeptide reads, in one-letter code: Small ribosomal subunit protein uS13 (124 aa).

A disordered region spans residues 95–124 (GLPVRGQRTRHNARTRKGPRKTVGAKKGKR). Positions 101-124 (QRTRHNARTRKGPRKTVGAKKGKR) are enriched in basic residues.

The protein belongs to the universal ribosomal protein uS13 family. As to quaternary structure, part of the 30S ribosomal subunit. Forms a loose heterodimer with protein S19. Forms two bridges to the 50S subunit in the 70S ribosome.

Functionally, located at the top of the head of the 30S subunit, it contacts several helices of the 16S rRNA. In the 70S ribosome it contacts the 23S rRNA (bridge B1a) and protein L5 of the 50S subunit (bridge B1b), connecting the 2 subunits; these bridges are implicated in subunit movement. Contacts the tRNAs in the A and P-sites. The polypeptide is Small ribosomal subunit protein uS13 (Coprothermobacter proteolyticus (strain ATCC 35245 / DSM 5265 / OCM 4 / BT)).